The following is a 229-amino-acid chain: Large ribosomal subunit protein uL1 (229 aa).

Belongs to the universal ribosomal protein uL1 family. In terms of assembly, part of the 50S ribosomal subunit.

Functionally, binds directly to 23S rRNA. The L1 stalk is quite mobile in the ribosome, and is involved in E site tRNA release. In terms of biological role, protein L1 is also a translational repressor protein, it controls the translation of the L11 operon by binding to its mRNA. The protein is Large ribosomal subunit protein uL1 of Mannheimia succiniciproducens (strain KCTC 0769BP / MBEL55E).